Reading from the N-terminus, the 512-residue chain is 2,3-bisphosphoglycerate-independent phosphoglycerate mutase (512 aa).

Residues D13 and S63 each contribute to the Mn(2+) site. Residue S63 is the Phosphoserine intermediate of the active site. Residues H124, 154–155, R186, R192, 262–265, and K337 each bind substrate; these read RD and RPDR. D404, H408, D445, H446, and H463 together coordinate Mn(2+).

Belongs to the BPG-independent phosphoglycerate mutase family. In terms of assembly, monomer. Mn(2+) serves as cofactor.

The enzyme catalyses (2R)-2-phosphoglycerate = (2R)-3-phosphoglycerate. The protein operates within carbohydrate degradation; glycolysis; pyruvate from D-glyceraldehyde 3-phosphate: step 3/5. Essential for rapid growth and for sporulation. Catalyzes the interconversion of 2-phosphoglycerate and 3-phosphoglycerate. The polypeptide is 2,3-bisphosphoglycerate-independent phosphoglycerate mutase (Oceanobacillus iheyensis (strain DSM 14371 / CIP 107618 / JCM 11309 / KCTC 3954 / HTE831)).